Here is a 185-residue protein sequence, read N- to C-terminus: Thymidine kinase (185 aa).

Residues 10-17 (GPMYSGKT) and 83-86 (DEVQ) each bind ATP. The active-site Proton acceptor is glutamate 84. 4 residues coordinate Zn(2+): cysteine 140, cysteine 143, cysteine 173, and cysteine 176.

This sequence belongs to the thymidine kinase family. Homotetramer.

Its subcellular location is the cytoplasm. It carries out the reaction thymidine + ATP = dTMP + ADP + H(+). The protein is Thymidine kinase of Pseudothermotoga lettingae (strain ATCC BAA-301 / DSM 14385 / NBRC 107922 / TMO) (Thermotoga lettingae).